Reading from the N-terminus, the 648-residue chain is Biosynthetic arginine decarboxylase (648 aa).

At lysine 109 the chain carries N6-(pyridoxal phosphate)lysine. 291–301 provides a ligand contact to substrate; that stretch reads LDVGGGLGVDY.

The protein belongs to the Orn/Lys/Arg decarboxylase class-II family. SpeA subfamily. Mg(2+) is required as a cofactor. The cofactor is pyridoxal 5'-phosphate.

It carries out the reaction L-arginine + H(+) = agmatine + CO2. Its function is as follows. Catalyzes the biosynthesis of agmatine from arginine. The chain is Biosynthetic arginine decarboxylase from Prochlorococcus marinus (strain MIT 9313).